A 168-amino-acid chain; its full sequence is Profilin-3 (168 aa).

The disordered stretch occupies residues 14–36 (LSLEHSDKPQRRSRAKVKKKKKT). The segment covering 24 to 36 (RRSRAKVKKKKKT) has biased composition (basic residues).

This sequence belongs to the profilin family. As to quaternary structure, occurs in many kinds of cells as a complex with monomeric actin in a 1:1 ratio. Binding to the poly-proline motif of formins induces formation of oligomers through the N-terminal hydrophobic residues of PRF3. Expressed in roots, rosette leaves, cauline leaves, stems and flowers.

The protein localises to the cytoplasm. Its subcellular location is the cytoskeleton. Functionally, binds to actin monomers and regulates the organization of the actin cytoskeleton. Can increase the critical concentration (Cc) of actin assembly in vitro. Acts as a downstream effector of the hydrogen sulfide signaling to regulate the assembly and depolymerization of F-actin. At high concentrations, profilin prevents the polymerization of actin, whereas it enhances it at low concentrations. Binding to the poly-proline motif of formin induces oligomerization of PRF3. PRF3 oligomers inhibit formin-mediated actin assembly to modulate plant immunity triggered by pathogen-associated molecular patterns (PAMPs). In Arabidopsis thaliana (Mouse-ear cress), this protein is Profilin-3.